Consider the following 860-residue polypeptide: DNA mismatch repair protein MutS (860 aa).

ATP is bound at residue 607–614; that stretch reads GPNMSGKS.

This sequence belongs to the DNA mismatch repair MutS family.

Functionally, this protein is involved in the repair of mismatches in DNA. It is possible that it carries out the mismatch recognition step. This protein has a weak ATPase activity. This is DNA mismatch repair protein MutS from Listeria monocytogenes serotype 4b (strain CLIP80459).